Reading from the N-terminus, the 542-residue chain is CTP synthase (542 aa).

The interval 1–265 (MARYVFITGG…DSEVLSAFGI (265 aa)) is amidoligase domain. Ser-13 provides a ligand contact to CTP. UTP is bound at residue Ser-13. 14-19 (SLGKGI) contributes to the ATP binding site. Tyr-54 serves as a coordination point for L-glutamine. An ATP-binding site is contributed by Asp-71. 2 residues coordinate Mg(2+): Asp-71 and Glu-139. CTP contacts are provided by residues 146 to 148 (DIE), 186 to 191 (KTKPTQ), and Lys-222. UTP is bound by residues 186–191 (KTKPTQ) and Lys-222. One can recognise a Glutamine amidotransferase type-1 domain in the interval 291–541 (TIAVVGKYTG…IEAAIEQSRL (251 aa)). Gly-353 contacts L-glutamine. The Nucleophile; for glutamine hydrolysis role is filled by Cys-380. L-glutamine is bound by residues 381–384 (FGMQ), Glu-404, and Arg-469. Active-site residues include His-514 and Glu-516.

It belongs to the CTP synthase family. As to quaternary structure, homotetramer.

It carries out the reaction UTP + L-glutamine + ATP + H2O = CTP + L-glutamate + ADP + phosphate + 2 H(+). The catalysed reaction is L-glutamine + H2O = L-glutamate + NH4(+). It catalyses the reaction UTP + NH4(+) + ATP = CTP + ADP + phosphate + 2 H(+). It functions in the pathway pyrimidine metabolism; CTP biosynthesis via de novo pathway; CTP from UDP: step 2/2. With respect to regulation, allosterically activated by GTP, when glutamine is the substrate; GTP has no effect on the reaction when ammonia is the substrate. The allosteric effector GTP functions by stabilizing the protein conformation that binds the tetrahedral intermediate(s) formed during glutamine hydrolysis. Inhibited by the product CTP, via allosteric rather than competitive inhibition. In terms of biological role, catalyzes the ATP-dependent amination of UTP to CTP with either L-glutamine or ammonia as the source of nitrogen. Regulates intracellular CTP levels through interactions with the four ribonucleotide triphosphates. This chain is CTP synthase, found in Brucella abortus (strain 2308).